The sequence spans 71 residues: MKLTCVVIVAVLLLTACQLLTADDSRGTQKHRALRSDTKLSMSTRCKGKGASCSRTMYNCCTGSCNRGKCG.

The N-terminal stretch at 1–22 is a signal peptide; sequence MKLTCVVIVAVLLLTACQLLTA. Positions 23-45 are excised as a propeptide; it reads DDSRGTQKHRALRSDTKLSMSTR. Intrachain disulfides connect Cys-46–Cys-61, Cys-53–Cys-65, and Cys-60–Cys-70. A Cysteine amide modification is found at Cys-70.

The protein belongs to the conotoxin O1 superfamily. As to expression, expressed by the venom duct.

It localises to the secreted. In terms of biological role, omega-conotoxins act at presynaptic membranes, they bind and block voltage-gated calcium channels (Cav). This is Omega-conotoxin-like Ac6.4 from Conus achatinus (Little frog cone).